The primary structure comprises 206 residues: Putative 3-methyladenine DNA glycosylase (206 aa).

The protein belongs to the DNA glycosylase MPG family.

This Salinibacter ruber (strain DSM 13855 / M31) protein is Putative 3-methyladenine DNA glycosylase.